Reading from the N-terminus, the 995-residue chain is Translation initiation factor IF-2 (995 aa).

Positions 53-399 (NNAGSPAPAA…SGAPRGQGQV (347 aa)) are disordered. 2 stretches are compositionally biased toward pro residues: residues 60–87 (PAAPPAVAPPTPTPTPPRTPTPAPPPGG) and 104–119 (TPGPKPKGPVPGPPQS). A compositionally biased stretch (low complexity) spans 135-160 (AAAEARAAALKAEQEAAVKAAQAARQ). The span at 161-171 (QQRENVRREPP) shows a compositional bias: basic and acidic residues. Residues 177 to 192 (RPGPRPGPGTMPPRPG) are compositionally biased toward pro residues. Residues 193–202 (SPAAGRSGAP) show a composition bias toward low complexity. Composition is skewed to pro residues over residues 203–213 (APGPGPRPGGR) and 242–264 (RPSPASMPPRPSPASMPPRPSPA). Residues 273–363 (RPGGPGSGRP…GAAGAFGRPG (91 aa)) are compositionally biased toward gly residues. Over residues 367–376 (TRGRKSKKQR) the composition is skewed to basic residues. The region spanning 486–658 (SRPPVVTVMG…VLLTADASLE (173 aa)) is the tr-type G domain. The interval 495–502 (GHVDHGKT) is G1. Position 495–502 (495–502 (GHVDHGKT)) interacts with GTP. A G2 region spans residues 520-524 (GITQH). The G3 stretch occupies residues 545–548 (DTPG). Residues 545 to 549 (DTPGH) and 599 to 602 (NKID) contribute to the GTP site. The segment at 599 to 602 (NKID) is G4. The interval 635 to 637 (AAK) is G5.

This sequence belongs to the TRAFAC class translation factor GTPase superfamily. Classic translation factor GTPase family. IF-2 subfamily.

It is found in the cytoplasm. Its function is as follows. One of the essential components for the initiation of protein synthesis. Protects formylmethionyl-tRNA from spontaneous hydrolysis and promotes its binding to the 30S ribosomal subunits. Also involved in the hydrolysis of GTP during the formation of the 70S ribosomal complex. In Salinispora arenicola (strain CNS-205), this protein is Translation initiation factor IF-2.